Reading from the N-terminus, the 211-residue chain is Protein-methionine-sulfoxide reductase heme-binding subunit MsrQ (211 aa).

A run of 5 helical transmembrane segments spans residues 10–30 (WLKV…AWAI), 82–102 (LWCF…ELGV), 116–136 (PYLT…FTST), 153–173 (FVYL…KIIS), and 178–198 (IYAG…LSLF).

This sequence belongs to the MsrQ family. As to quaternary structure, heterodimer of a catalytic subunit (MsrP) and a heme-binding subunit (MsrQ). FMN serves as cofactor. Requires heme b as cofactor.

The protein resides in the cell inner membrane. In terms of biological role, part of the MsrPQ system that repairs oxidized periplasmic proteins containing methionine sulfoxide residues (Met-O), using respiratory chain electrons. Thus protects these proteins from oxidative-stress damage caused by reactive species of oxygen and chlorine generated by the host defense mechanisms. MsrPQ is essential for the maintenance of envelope integrity under bleach stress, rescuing a wide series of structurally unrelated periplasmic proteins from methionine oxidation, including the primary periplasmic chaperone SurA and the lipoprotein Pal. MsrQ provides electrons for reduction to the reductase catalytic subunit MsrP, using the quinone pool of the respiratory chain. This is Protein-methionine-sulfoxide reductase heme-binding subunit MsrQ from Escherichia coli (strain UTI89 / UPEC).